The chain runs to 36 residues: Dermonecrotic toxin LgSicTox-beta-LOXN1/LOXN7 (36 aa).

It belongs to the arthropod phospholipase D family. Class II subfamily. Mg(2+) is required as a cofactor. Post-translationally, contains 2 disulfide bonds. As to expression, expressed by the venom gland.

It localises to the secreted. The enzyme catalyses an N-(acyl)-sphingosylphosphocholine = an N-(acyl)-sphingosyl-1,3-cyclic phosphate + choline. It catalyses the reaction an N-(acyl)-sphingosylphosphoethanolamine = an N-(acyl)-sphingosyl-1,3-cyclic phosphate + ethanolamine. It carries out the reaction a 1-acyl-sn-glycero-3-phosphocholine = a 1-acyl-sn-glycero-2,3-cyclic phosphate + choline. The catalysed reaction is a 1-acyl-sn-glycero-3-phosphoethanolamine = a 1-acyl-sn-glycero-2,3-cyclic phosphate + ethanolamine. Functionally, dermonecrotic toxins cleave the phosphodiester linkage between the phosphate and headgroup of certain phospholipids (sphingolipid and lysolipid substrates), forming an alcohol (often choline) and a cyclic phosphate. This toxin acts on sphingomyelin (SM). It may also act on ceramide phosphoethanolamine (CPE), lysophosphatidylcholine (LPC) and lysophosphatidylethanolamine (LPE), but not on lysophosphatidylserine (LPS), and lysophosphatidylglycerol (LPG). It acts by transphosphatidylation, releasing exclusively cyclic phosphate products as second products. Induces dermonecrosis, hemolysis, increased vascular permeability, edema, inflammatory response, and platelet aggregation. In Loxosceles gaucho (Spider), this protein is Dermonecrotic toxin LgSicTox-beta-LOXN1/LOXN7.